We begin with the raw amino-acid sequence, 912 residues long: Alpha-actinin-4 (912 aa).

Residues 1–267 (MVDYHAANQA…IMTYVSSFYH (267 aa)) are actin-binding. Positions 12–27 (QYGPNSGGGNGAGGGG) are interaction with VCL. A disordered region spans residues 12-31 (QYGPNSGGGNGAGGGGSMGD). Residues 16–29 (NSGGGNGAGGGGSM) show a composition bias toward gly residues. Tyr32 is modified (phosphotyrosine). Positions 41-62 (RDLLLDPAWEKQQRKTFTAWCN) are interaction with VCL. Calponin-homology (CH) domains are found at residues 51 to 155 (KQQR…LRFA) and 164 to 270 (TSAK…HAFS). Positions 85–89 (LMLLL) match the LXXLL motif motif. Positions 109–127 (KINNVNKALDFIASKGVKL) are interaction with VCL. Position 115 is an N6-acetyllysine (Lys115). The interval 178–193 (TAPYKNVNVQNFHISW) is polyphosphoinositide (PIP2)-binding. The residue at position 215 (Lys215) is an N6-acetyllysine. Thr250 is modified (phosphothreonine). Spectrin repeat units lie at residues 294-404 (HLME…WLLN), 414-519 (HLAE…ALEK), 529-640 (QLHL…ALLE), and 650-753 (HLRR…EVEN). 2 positions are modified to N6-acetyllysine: Lys593 and Lys626. Ser697 carries the post-translational modification Phosphoserine. The segment at 737–912 (WEQLLTTIAR…STALYGESDL (176 aa)) is mediates interaction with MICALL2. EF-hand domains lie at 766-801 (EQMQ…LGYD) and 807-842 (QGDA…ETTD). Residue Asp779 participates in Ca(2+) binding. Residue Lys780 is modified to N6-acetyllysine. The Ca(2+) site is built by Asp781 and Glu790. N6-acetyllysine is present on Lys860. Phosphoserine is present on Ser910.

This sequence belongs to the alpha-actinin family. In terms of assembly, homodimer; antiparallel. Interacts with MAGI1. Interacts with PDLIM2. Identified in a complex with CASK, IQGAP1, MAGI2, NPHS1, SPTAN1 and SPTBN1. Identified in a IGF2BP1-dependent mRNP granule complex containing untranslated mRNAs. Component of the CART complex, at least composed of ACTN4, HGS/HRS, MYO5B and TRIM3. Binds TRIM3 at the N-terminus. Interacts with MICALL2 (preferentially in opened conformation); stimulated by RAB13 activation. Interacts with PPARG and RARA. Binds to VCL; this interaction triggers VCL conformational changes. Interacts with SEPTIN14. Interacts with IGSF8.

The protein resides in the nucleus. The protein localises to the cytoplasm. It is found in the cell junction. Its subcellular location is the cytoskeleton. It localises to the stress fiber. The protein resides in the perinuclear region. Its function is as follows. F-actin cross-linking protein which is thought to anchor actin to a variety of intracellular structures. This is a bundling protein. Probably involved in vesicular trafficking via its association with the CART complex. The CART complex is necessary for efficient transferrin receptor recycling but not for EGFR degradation. Involved in tight junction assembly in epithelial cells probably through interaction with MICALL2. Links MICALL2 to the actin cytoskeleton and recruits it to the tight junctions. May also function as a transcriptional coactivator, stimulating transcription mediated by the nuclear hormone receptors PPARG and RARA. Association with IGSF8 regulates the immune synapse formation and is required for efficient T-cell activation. The polypeptide is Alpha-actinin-4 (Mus musculus (Mouse)).